Consider the following 155-residue polypeptide: uncharacterized protein (155 aa).

4 helical membrane passes run 2–24 (TFLF…PPIF), 62–84 (AVVN…YLVL), 97–116 (VFLI…FLVV), and 131–148 (VVLL…KVFN).

It is found in the cell membrane. This is an uncharacterized protein from Aquifex aeolicus (strain VF5).